Here is a 212-residue protein sequence, read N- to C-terminus: Large ribosomal subunit protein uL3 (212 aa).

Over residues 135–155 the composition is skewed to polar residues; sequence ATHGNSVSHRAHGSTGQNQSP. Positions 135–162 are disordered; that stretch reads ATHGNSVSHRAHGSTGQNQSPGKVFKGK. The residue at position 153 (Gln153) is an N5-methylglutamine.

Belongs to the universal ribosomal protein uL3 family. Part of the 50S ribosomal subunit. Forms a cluster with proteins L14 and L19. In terms of processing, methylated by PrmB.

Its function is as follows. One of the primary rRNA binding proteins, it binds directly near the 3'-end of the 23S rRNA, where it nucleates assembly of the 50S subunit. The chain is Large ribosomal subunit protein uL3 from Psychrobacter arcticus (strain DSM 17307 / VKM B-2377 / 273-4).